The chain runs to 315 residues: Zinc finger CCCH domain-containing protein 23 (315 aa).

The disordered stretch occupies residues 1-21; sequence MMIGENKNRPHPTIHIPQWDQ. C3H1-type zinc fingers lie at residues 131–157 and 165–189; these read YSGTACPEFRKGSCRRGDSCEFSHGVF and RYRTQPCKDGTSCRRRICFFAHTTE.

The protein is Zinc finger CCCH domain-containing protein 23 of Arabidopsis thaliana (Mouse-ear cress).